Here is a 40-residue protein sequence, read N- to C-terminus: Photosystem II reaction center protein J (40 aa).

Residues 8 to 28 traverse the membrane as a helical segment; sequence IPLWLIGTVTGIPVIGLVGVF.

Belongs to the PsbJ family. PSII is composed of 1 copy each of membrane proteins PsbA, PsbB, PsbC, PsbD, PsbE, PsbF, PsbH, PsbI, PsbJ, PsbK, PsbL, PsbM, PsbT, PsbX, PsbY, PsbZ, Psb30/Ycf12, at least 3 peripheral proteins of the oxygen-evolving complex and a large number of cofactors. It forms dimeric complexes.

The protein localises to the plastid. Its subcellular location is the chloroplast thylakoid membrane. In terms of biological role, one of the components of the core complex of photosystem II (PSII). PSII is a light-driven water:plastoquinone oxidoreductase that uses light energy to abstract electrons from H(2)O, generating O(2) and a proton gradient subsequently used for ATP formation. It consists of a core antenna complex that captures photons, and an electron transfer chain that converts photonic excitation into a charge separation. The protein is Photosystem II reaction center protein J of Lolium perenne (Perennial ryegrass).